The primary structure comprises 171 residues: Putative charged multivesicular body protein 4B-like protein CHMP4BP1 (171 aa).

Basic and acidic residues predominate over residues 1 to 17; sequence MLSKKQEFLEKKIEQRH. 2 disordered regions span residues 1-24 and 132-171; these read MLSK…NKPA and EQEE…KTTT.

It belongs to the SNF7 family.

In Homo sapiens (Human), this protein is Putative charged multivesicular body protein 4B-like protein CHMP4BP1 (CHMP4BP1).